Here is a 35-residue protein sequence, read N- to C-terminus: uncharacterized protein (35 aa).

Low complexity predominate over residues 1–27; sequence MDQNEANIYNENNENNENNENENCQNE. Residues 1 to 35 form a disordered region; it reads MDQNEANIYNENNENNENNENENCQNEPIRIKIII.

This is an uncharacterized protein from Dictyostelium discoideum (Social amoeba).